Here is a 206-residue protein sequence, read N- to C-terminus: Threonine efflux protein (206 aa).

A helical membrane pass occupies residues 1-21; that stretch reads MMMLFFTVAMVHIVALMSPGP. The Periplasmic portion of the chain corresponds to 22-43; it reads DFFFVSQTAVSRSRKEAMMGVL. Residues 44–64 traverse the membrane as a helical segment; that stretch reads GITCGVMVWAGVALLGLHLII. Residues 65-66 lie on the Cytoplasmic side of the membrane; sequence EK. The helical transmembrane segment at 67 to 87 threads the bilayer; it reads MAWLHTIIMVGGGLYLCWMGY. Topologically, residues 88–149 are periplasmic; that stretch reads QMLRGALKKQ…VGDNVGAAAR (62 aa). The helical transmembrane segment at 150–173 threads the bilayer; sequence WGIFALITLETLAWFTVVASLFAL. At 174-206 the chain is on the cytoplasmic side; sequence PKMRRGYQRLAKWIDGFAGALFAGFGIHLIISR.

This sequence belongs to the Rht family.

Its subcellular location is the cell inner membrane. In terms of biological role, conducts the efflux of threonine. This Salmonella typhimurium (strain LT2 / SGSC1412 / ATCC 700720) protein is Threonine efflux protein (rhtC).